Here is a 107-residue protein sequence, read N- to C-terminus: Phosphoribosyl-ATP pyrophosphatase (107 aa).

This sequence belongs to the PRA-PH family.

It localises to the cytoplasm. The catalysed reaction is 1-(5-phospho-beta-D-ribosyl)-ATP + H2O = 1-(5-phospho-beta-D-ribosyl)-5'-AMP + diphosphate + H(+). The protein operates within amino-acid biosynthesis; L-histidine biosynthesis; L-histidine from 5-phospho-alpha-D-ribose 1-diphosphate: step 2/9. The polypeptide is Phosphoribosyl-ATP pyrophosphatase (Caulobacter sp. (strain K31)).